The primary structure comprises 178 residues: MAENVTIARPYADAAFELARGAGALGPWSEALDRLAAAAADASMKACISNPKLSADQLYQLFIDVAGQGFTPELQNFVRVLVDNERLQMLPEIRDLFVELKNEHEGVQEAEIASAFPLDDATLANLKADLETRFKTRLNTKVSLDPELIGGVRIAIGDEVIDASVRGKLANMAAALKN.

It belongs to the ATPase delta chain family. As to quaternary structure, F-type ATPases have 2 components, F(1) - the catalytic core - and F(0) - the membrane proton channel. F(1) has five subunits: alpha(3), beta(3), gamma(1), delta(1), epsilon(1). F(0) has three main subunits: a(1), b(2) and c(10-14). The alpha and beta chains form an alternating ring which encloses part of the gamma chain. F(1) is attached to F(0) by a central stalk formed by the gamma and epsilon chains, while a peripheral stalk is formed by the delta and b chains.

It is found in the cell inner membrane. Its function is as follows. F(1)F(0) ATP synthase produces ATP from ADP in the presence of a proton or sodium gradient. F-type ATPases consist of two structural domains, F(1) containing the extramembraneous catalytic core and F(0) containing the membrane proton channel, linked together by a central stalk and a peripheral stalk. During catalysis, ATP synthesis in the catalytic domain of F(1) is coupled via a rotary mechanism of the central stalk subunits to proton translocation. This protein is part of the stalk that links CF(0) to CF(1). It either transmits conformational changes from CF(0) to CF(1) or is implicated in proton conduction. The sequence is that of ATP synthase subunit delta from Aromatoleum aromaticum (strain DSM 19018 / LMG 30748 / EbN1) (Azoarcus sp. (strain EbN1)).